We begin with the raw amino-acid sequence, 314 residues long: Acetyl-coenzyme A carboxylase carboxyl transferase subunit beta (314 aa).

The 271-residue stretch at 37-307 (LWQKCPACDT…MSLPSIDSEA (271 aa)) folds into the CoA carboxyltransferase N-terminal domain. Zn(2+) contacts are provided by cysteine 41, cysteine 44, cysteine 60, and cysteine 63. A C4-type zinc finger spans residues 41–63 (CPACDTLTYTKDLQQNWQVCPSC).

This sequence belongs to the AccD/PCCB family. As to quaternary structure, acetyl-CoA carboxylase is a heterohexamer composed of biotin carboxyl carrier protein (AccB), biotin carboxylase (AccC) and two subunits each of ACCase subunit alpha (AccA) and ACCase subunit beta (AccD). Requires Zn(2+) as cofactor.

Its subcellular location is the cytoplasm. It carries out the reaction N(6)-carboxybiotinyl-L-lysyl-[protein] + acetyl-CoA = N(6)-biotinyl-L-lysyl-[protein] + malonyl-CoA. It participates in lipid metabolism; malonyl-CoA biosynthesis; malonyl-CoA from acetyl-CoA: step 1/1. Functionally, component of the acetyl coenzyme A carboxylase (ACC) complex. Biotin carboxylase (BC) catalyzes the carboxylation of biotin on its carrier protein (BCCP) and then the CO(2) group is transferred by the transcarboxylase to acetyl-CoA to form malonyl-CoA. This is Acetyl-coenzyme A carboxylase carboxyl transferase subunit beta from Synechococcus sp. (strain JA-2-3B'a(2-13)) (Cyanobacteria bacterium Yellowstone B-Prime).